The chain runs to 408 residues: Substance-P receptor (408 aa).

The Extracellular portion of the chain corresponds to 1 to 32 (MNSNISAQNDSALNSTIQNGTKINQFIQPPWQ). 4 N-linked (GlcNAc...) asparagine glycosylation sites follow: Asn-4, Asn-9, Asn-14, and Asn-19. Residues 33 to 55 (IALWSVAYSIIVIVSLVGNIIVM) traverse the membrane as a helical segment. Topologically, residues 56–65 (WIIIAHKRMR) are cytoplasmic. A helical membrane pass occupies residues 66 to 87 (TVTNYFLVNLAFAEASMSAFNT). At 88–107 (VINFTYAIHNHWYYGLIYCK) the chain is on the extracellular side. Residues Cys-106 and Cys-181 are joined by a disulfide bond. The chain crosses the membrane as a helical span at residues 108–129 (FHNFFPISAVFTSIYSMTAIAL). The Cytoplasmic segment spans residues 130-149 (DRYMAIIHPLKPRLSATATK). The chain crosses the membrane as a helical span at residues 150–170 (IVICVIWSFSFCMAFPLGYYA). The Extracellular portion of the chain corresponds to 171–196 (DVYPMEGGDICYLNWPDSEENRKYEQ). Residues 197-221 (VYQVLVFCLIYILPLLVIGCAYTFI) form a helical membrane-spanning segment. Topologically, residues 222–250 (GMTLWASEIPGDSSDRYHEQVVAKRKVVK) are cytoplasmic. A helical membrane pass occupies residues 251–272 (MMIVVVCTFAICWLPFHIFFLL). Residues 273–283 (QTLHEMTQKFY) lie on the Extracellular side of the membrane. A helical membrane pass occupies residues 284–308 (QQFYLAIMWLAMSSTMYNPIIYCCL). Over 309-408 (NDRFRIGFKH…SSSFYSNNLA (100 aa)) the chain is Cytoplasmic. Residue Cys-323 is the site of S-palmitoyl cysteine attachment. The interval 366–408 (DEEAEENGKSSKRLSLDLTSNGSSRSVCKTMSDSSSFYSNNLA) is disordered. The span at 382–408 (DLTSNGSSRSVCKTMSDSSSFYSNNLA) shows a compositional bias: polar residues.

This sequence belongs to the G-protein coupled receptor 1 family.

The protein localises to the cell membrane. This is a receptor for the tachykinin neuropeptide substance P. It is probably associated with G proteins that activate a phosphatidylinositol-calcium second messenger system. The chain is Substance-P receptor (TACR1) from Aquarana catesbeiana (American bullfrog).